Here is a 519-residue protein sequence, read N- to C-terminus: (3S,6E)-nerolidol synthase 1 (519 aa).

Mg(2+)-binding residues include Asp-273, Asp-277, Asp-417, Ser-421, and Glu-425. Positions 273–277 (DDIFD) match the DDXXD motif motif.

The protein belongs to the terpene synthase family. Tpsg subfamily. It depends on Mg(2+) as a cofactor. Requires Mn(2+) as cofactor. As to expression, expressed in receptacle tissue. Not detected in leaves or green fruit.

It localises to the cytoplasm. The protein resides in the cytosol. The enzyme catalyses (2E,6E)-farnesyl diphosphate + H2O = (3S,6E)-nerolidol + diphosphate. Its pathway is secondary metabolite biosynthesis; terpenoid biosynthesis. Involved in monoterpene (C10) and sesquiterpene (C15) biosynthesis. Converts geranyl diphosphate (GPP) into S-linalool and farnesyl diphosphate (FPP) into (3S)-E-nerolidol. Exclusively present and highly expressed in the fruit of cultivated (octaploid) varieties. This is (3S,6E)-nerolidol synthase 1 from Fragaria ananassa (Strawberry).